Consider the following 471-residue polypeptide: Intraflagellar transport protein 46 homolog (471 aa).

Disordered regions lie at residues 1-202 (MSSE…SNMR) and 226-246 (SRLE…EDDD). Composition is skewed to acidic residues over residues 89-99 (SEPQEVIDVND) and 231-246 (DSSN…EDDD).

Belongs to the IFT46 family. In terms of assembly, component of the IFT complex B composed of at least che-2, che-13, dyf-1, dyf-3, dyf-6, dyf-11, dyf-13, ift-20, ift-74, ift-81, ifta-2, osm-1, osm-5 and osm-6. As to expression, expressed in the hypodermis and sensory neurons including inner labial, PDE, amphid and phasmid neurons.

It is found in the cell projection. The protein resides in the cilium. Its subcellular location is the cytoplasm. The protein localises to the cytoskeleton. It localises to the cilium basal body. It is found in the dendrite. The protein resides in the perikaryon. In terms of biological role, component of the intraflagellar transport (IFT) complex B required for transport of proteins in the motile cilium. May be required for ciliary entrance and transport of specific ciliary cargo proteins such as che-3 which are related to motility. Required for normal morphology and function of ciliated amphid sensory neurons. This Caenorhabditis elegans protein is Intraflagellar transport protein 46 homolog.